Here is a 121-residue protein sequence, read N- to C-terminus: Large ribosomal subunit protein bL12 (121 aa).

Belongs to the bacterial ribosomal protein bL12 family. In terms of assembly, homodimer. Part of the ribosomal stalk of the 50S ribosomal subunit. Forms a multimeric L10(L12)X complex, where L10 forms an elongated spine to which 2 to 4 L12 dimers bind in a sequential fashion. Binds GTP-bound translation factors.

Forms part of the ribosomal stalk which helps the ribosome interact with GTP-bound translation factors. Is thus essential for accurate translation. This is Large ribosomal subunit protein bL12 from Anoxybacillus flavithermus (strain DSM 21510 / WK1).